The following is a 113-amino-acid chain: MPRPPKCRWVRSEPNVTHFKPVGVPMSMLDEVILTVEELEAIRLKDLEGLEQEECADMMKVSRPTFFRIINSARQKVADALVNGKAIRVEGGNYRVYEEEQRGHRGMRHRHGH.

It belongs to the UPF0251 family.

This chain is UPF0251 protein Teth514_1147, found in Thermoanaerobacter sp. (strain X514).